Consider the following 288-residue polypeptide: Acetyl-coenzyme A carboxylase carboxyl transferase subunit beta (288 aa).

The CoA carboxyltransferase N-terminal domain maps to 34–288; that stretch reads LFSKCPACKV…RLLRMHGGVR (255 aa). Zn(2+) contacts are provided by Cys-38, Cys-41, Cys-56, and Cys-59. Residues 38-59 form a C4-type zinc finger; the sequence is CPACKVILYKNDLGLEKTCQHC.

The protein belongs to the AccD/PCCB family. In terms of assembly, acetyl-CoA carboxylase is a heterohexamer composed of biotin carboxyl carrier protein (AccB), biotin carboxylase (AccC) and two subunits each of ACCase subunit alpha (AccA) and ACCase subunit beta (AccD). Requires Zn(2+) as cofactor.

Its subcellular location is the cytoplasm. The catalysed reaction is N(6)-carboxybiotinyl-L-lysyl-[protein] + acetyl-CoA = N(6)-biotinyl-L-lysyl-[protein] + malonyl-CoA. The protein operates within lipid metabolism; malonyl-CoA biosynthesis; malonyl-CoA from acetyl-CoA: step 1/1. Functionally, component of the acetyl coenzyme A carboxylase (ACC) complex. Biotin carboxylase (BC) catalyzes the carboxylation of biotin on its carrier protein (BCCP) and then the CO(2) group is transferred by the transcarboxylase to acetyl-CoA to form malonyl-CoA. This is Acetyl-coenzyme A carboxylase carboxyl transferase subunit beta from Streptococcus suis (strain 98HAH33).